Reading from the N-terminus, the 620-residue chain is Ion-translocating oxidoreductase complex subunit C (620 aa).

2 consecutive 4Fe-4S ferredoxin-type domains span residues 366–397 (TEMG…QQLY) and 407–436 (KARN…VQYY). The [4Fe-4S] cluster site is built by Cys377, Cys380, Cys383, Cys387, Cys416, Cys419, Cys422, and Cys426.

This sequence belongs to the 4Fe4S bacterial-type ferredoxin family. RnfC subfamily. The complex is composed of six subunits: RnfA, RnfB, RnfC, RnfD, RnfE and RnfG. [4Fe-4S] cluster is required as a cofactor.

It is found in the cell inner membrane. Functionally, part of a membrane-bound complex that couples electron transfer with translocation of ions across the membrane. In Yersinia pestis bv. Antiqua (strain Antiqua), this protein is Ion-translocating oxidoreductase complex subunit C.